The sequence spans 290 residues: PIH1 domain-containing protein 1 (290 aa).

Phosphoserine is present on residues Ser12 and Ser173.

It belongs to the PIH1 family. As to quaternary structure, component of the R2TP complex composed at least of RUVBL1, RUVBL2, RPAP3 and PIHD1. Component of the PAQosome complex which is responsible for the biogenesis of several protein complexes and which consists of R2TP complex members RUVBL1, RUVBL2, RPAP3 and PIH1D1, URI complex members PFDN2, PFDN6, PDRG1, UXT and URI1 as well as ASDURF, POLR2E and DNAAF10/WDR92. Interacts with phosphorylated TELO2 and mediates interaction of TELO2 with the R2TP complex. Interacts with phosphorylated ECD, EFTUD2/SNRP116, RPB1 and UBR5 and with RPB1 in a phosphorylation-independent manner. Interacts with the core C/D box snoRNP particle components NOP58 and FBL and with RUVBL1/TIP49. Interacts with RPAP3 and DNAAF10. Interacts with histone H4 and with SWI/SNF complex member SMARCB1/SNF5. Interacts with the mTORC1 complex member RPTOR. Interacts with MSL1. As to expression, expressed at low levels in normal mammary epithelial cells (at protein level). Highest expression in lung, leukocyte and placenta. Expressed at lower levels in brain, prostate, colon, heart, small intestine, liver, ovary, pancreas, skeletal muscle, spleen, testis and thymus.

The protein resides in the nucleus. In terms of biological role, involved in the assembly of C/D box small nucleolar ribonucleoprotein (snoRNP) particles. Recruits the SWI/SNF complex to the core promoter of rRNA genes and enhances pre-rRNA transcription. Mediates interaction of TELO2 with the R2TP complex which is necessary for the stability of MTOR and SMG1. Positively regulates the assembly and activity of the mTORC1 complex. The chain is PIH1 domain-containing protein 1 (PIH1D1) from Homo sapiens (Human).